Consider the following 206-residue polypeptide: Small ribosomal subunit protein uS4 (206 aa).

One can recognise an S4 RNA-binding domain in the interval 96–158 (SRLDNVVYRM…AKKQLRIQNA (63 aa)).

It belongs to the universal ribosomal protein uS4 family. Part of the 30S ribosomal subunit. Contacts protein S5. The interaction surface between S4 and S5 is involved in control of translational fidelity.

In terms of biological role, one of the primary rRNA binding proteins, it binds directly to 16S rRNA where it nucleates assembly of the body of the 30S subunit. With S5 and S12 plays an important role in translational accuracy. The sequence is that of Small ribosomal subunit protein uS4 from Francisella tularensis subsp. tularensis (strain FSC 198).